The sequence spans 894 residues: DNA mismatch repair protein MutS (894 aa).

632–639 is a binding site for ATP; sequence GPNMGGKS.

Belongs to the DNA mismatch repair MutS family.

Its function is as follows. This protein is involved in the repair of mismatches in DNA. It is possible that it carries out the mismatch recognition step. This protein has a weak ATPase activity. This is DNA mismatch repair protein MutS from Paraburkholderia xenovorans (strain LB400).